We begin with the raw amino-acid sequence, 422 residues long: 3-phosphoshikimate 1-carboxyvinyltransferase (422 aa).

The 3-phosphoshikimate site is built by K20, S21, and R25. K20 serves as a coordination point for phosphoenolpyruvate. Residues G91 and R119 each contribute to the phosphoenolpyruvate site. Residues T163, S164, Q165, D305, Q328, and K332 each coordinate 3-phosphoshikimate. Position 165 (Q165) interacts with phosphoenolpyruvate. D305 functions as the Proton acceptor in the catalytic mechanism. Residues R336 and R377 each contribute to the phosphoenolpyruvate site.

The protein belongs to the EPSP synthase family. As to quaternary structure, monomer.

It localises to the cytoplasm. The enzyme catalyses 3-phosphoshikimate + phosphoenolpyruvate = 5-O-(1-carboxyvinyl)-3-phosphoshikimate + phosphate. It participates in metabolic intermediate biosynthesis; chorismate biosynthesis; chorismate from D-erythrose 4-phosphate and phosphoenolpyruvate: step 6/7. Catalyzes the transfer of the enolpyruvyl moiety of phosphoenolpyruvate (PEP) to the 5-hydroxyl of shikimate-3-phosphate (S3P) to produce enolpyruvyl shikimate-3-phosphate and inorganic phosphate. This chain is 3-phosphoshikimate 1-carboxyvinyltransferase, found in Ruminiclostridium cellulolyticum (strain ATCC 35319 / DSM 5812 / JCM 6584 / H10) (Clostridium cellulolyticum).